The primary structure comprises 816 residues: Phosphatidylinositol 4-kinase beta (816 aa).

The disordered stretch occupies residues 1 to 30 (MGDTVVEPAPLKPTSEPTSGPPGNNGGSLL). An N-acetylglycine modification is found at Gly-2. Residues 29-242 (LLSVITEGVG…GTKLRKLILS (214 aa)) enclose the PIK helical domain. The interaction with ACBD3 stretch occupies residues 41–67 (SVIDPEVAQKACQEVLEKVKLLHGGVA). 2 disordered regions span residues 101-120 (EDEM…RRRR) and 248-318 (AHRK…SFSS). At Ser-258 the chain carries Phosphoserine. Residue Thr-263 is modified to Phosphothreonine. Phosphoserine is present on residues Ser-266, Ser-275, Ser-277, Ser-284, and Ser-294. Composition is skewed to polar residues over residues 278-297 (DATA…SNPK) and 306-318 (SSST…SFSS). Ser-428 carries the phosphoserine modification. A Phosphothreonine modification is found at Thr-438. Ser-511 is modified (phosphoserine). Phosphothreonine occurs at positions 517 and 519. The 267-residue stretch at 535 to 801 (EPWQEKVRRI…MVDGSMRSIT (267 aa)) folds into the PI3K/PI4K catalytic domain. The tract at residues 541-547 (VRRIREG) is G-loop. Positions 668-676 (QVKDRHNGN) are catalytic loop. Positions 687-711 (HIDFGFILSSSPRNLGFETSAFKLT) are activation loop.

Belongs to the PI3/PI4-kinase family. Type III PI4K subfamily. Interacts with ARF1 and ARF3 in the Golgi complex, but not with ARF4, ARF5 or ARF6. Interacts with NCS1/FREQ in a calcium-independent manner. Interacts with CALN1/CABP8 and CALN2/CABP7; in a calcium-dependent manner; this interaction competes with NCS1/FREQ binding. Interacts with ACBD3. Interacts with ARMH3, YWHAB, YWHAE, YWHAG, YWHAH, YWHAQ, YWHAZ and SFN. Interacts with GGA2 (via VHS domain); the interaction is important for PI4KB location at the Golgi apparatus membrane. Interacts with ATG9A. As to quaternary structure, (Microbial infection) Interacts with Aichi virus protein 3A. Part of a complex Aichi virus protein 3A/ACBD3/PI4KB that allows the synthesis of PI4P at the viral RNA replication sites. The cofactor is Mg(2+). Mn(2+) is required as a cofactor. Widely expressed with highest levels in heart, skeletal muscle, pancreas, testis and ovary. Weakly expressed in liver. Expressed in the innear ear in the epithelium of the spinal organ of corti.

It localises to the endomembrane system. It is found in the mitochondrion outer membrane. Its subcellular location is the rough endoplasmic reticulum membrane. The protein localises to the golgi apparatus. The protein resides in the golgi apparatus membrane. It localises to the cytoplasm. It is found in the perinuclear region. The catalysed reaction is a 1,2-diacyl-sn-glycero-3-phospho-(1D-myo-inositol) + ATP = a 1,2-diacyl-sn-glycero-3-phospho-(1D-myo-inositol 4-phosphate) + ADP + H(+). Inhibited by wortmannin and adenosine. Increased kinase activity upon interaction with NCS1/FREQ. Its activity is regulated as follows. (Microbial infection) Activated by Aichi virus protein 3A, this activation is sensitized by ACBD3. In terms of biological role, phosphorylates phosphatidylinositol (PI) in the first committed step in the production of the second messenger inositol-1,4,5,-trisphosphate (PIP). May regulate Golgi disintegration/reorganization during mitosis, possibly via its phosphorylation. Involved in Golgi-to-plasma membrane trafficking. May play an important role in the inner ear development. Functionally, (Microbial infection) Plays an essential role in Aichi virus RNA replication. Recruited by ACBD3 at the viral replication sites. Its function is as follows. (Microbial infection) Required for cellular spike-mediated entry of human coronavirus SARS-CoV. This Homo sapiens (Human) protein is Phosphatidylinositol 4-kinase beta.